The chain runs to 224 residues: Octanoyltransferase (224 aa).

A BPL/LPL catalytic domain is found at 38 to 213 (AETTDEVWLL…QFVRAAGFQS (176 aa)). Residues 77–84 (RGGQVTYH), 144–146 (SLG), and 157–159 (GLA) contribute to the substrate site. Cysteine 175 acts as the Acyl-thioester intermediate in catalysis.

Belongs to the LipB family.

Its subcellular location is the cytoplasm. The enzyme catalyses octanoyl-[ACP] + L-lysyl-[protein] = N(6)-octanoyl-L-lysyl-[protein] + holo-[ACP] + H(+). It participates in protein modification; protein lipoylation via endogenous pathway; protein N(6)-(lipoyl)lysine from octanoyl-[acyl-carrier-protein]: step 1/2. Functionally, catalyzes the transfer of endogenously produced octanoic acid from octanoyl-acyl-carrier-protein onto the lipoyl domains of lipoate-dependent enzymes. Lipoyl-ACP can also act as a substrate although octanoyl-ACP is likely to be the physiological substrate. This chain is Octanoyltransferase, found in Hahella chejuensis (strain KCTC 2396).